Consider the following 131-residue polypeptide: Profilin-4 (131 aa).

A disulfide bridge links cysteine 13 with cysteine 115. Positions 81–97 match the Involved in PIP2 interaction motif; the sequence is AVIRGKKGAGGITIKKT. Threonine 111 bears the Phosphothreonine mark.

It belongs to the profilin family. In terms of assembly, occurs in many kinds of cells as a complex with monomeric actin in a 1:1 ratio. Phosphorylated by MAP kinases.

It is found in the cytoplasm. The protein resides in the cytoskeleton. Functionally, binds to actin and affects the structure of the cytoskeleton. At high concentrations, profilin prevents the polymerization of actin, whereas it enhances it at low concentrations. The protein is Profilin-4 of Phleum pratense (Common timothy).